The chain runs to 496 residues: Cytochrome P450 71A15 (496 aa).

The chain crosses the membrane as a helical span at residues 3 to 23 (IIIISLCLATILAFLLLKPLL). Cys-439 is a heme binding site.

Belongs to the cytochrome P450 family. Heme is required as a cofactor.

The protein localises to the membrane. The chain is Cytochrome P450 71A15 (CYP71A15) from Arabidopsis thaliana (Mouse-ear cress).